A 432-amino-acid polypeptide reads, in one-letter code: Protein arginine N-methyltransferase 2 (432 aa).

A compositionally biased stretch (low complexity) spans 1–11; sequence MESSSECSSIS. The interval 1–22 is disordered; sequence MESSSECSSISDFQDSTEGDDA. Residues 29–88 enclose the SH3 domain; sequence LCMREYVVICDYVATDNTQLSLCSGDKVLLLNAVSQDWWWVNHNGTCGYVPASHLHDALN. One can recognise an SAM-dependent MTase PRMT-type domain in the interval 101–405; the sequence is DEEYYGSYKT…FERNSVWRRH (305 aa). S-adenosyl-L-methionine-binding residues include histidine 114, arginine 123, glycine 147, glutamate 170, and glutamate 199. Active-site residues include glutamate 213 and glutamate 222.

This sequence belongs to the class I-like SAM-binding methyltransferase superfamily. Protein arginine N-methyltransferase family. Interacts with ctnnb1.

The protein localises to the cytoplasm. Its subcellular location is the nucleus. The enzyme catalyses L-arginyl-[protein] + 2 S-adenosyl-L-methionine = N(omega),N(omega)-dimethyl-L-arginyl-[protein] + 2 S-adenosyl-L-homocysteine + 2 H(+). Functionally, arginine methyltransferase that methylates the guanidino nitrogens of arginyl residues in proteins such as histones. Involved in growth regulation. Involved in embryonic dorsal development. The sequence is that of Protein arginine N-methyltransferase 2 (prmt2) from Xenopus laevis (African clawed frog).